Reading from the N-terminus, the 103-residue chain is Large ribosomal subunit protein uL24 (103 aa).

It belongs to the universal ribosomal protein uL24 family. Part of the 50S ribosomal subunit.

Functionally, one of two assembly initiator proteins, it binds directly to the 5'-end of the 23S rRNA, where it nucleates assembly of the 50S subunit. One of the proteins that surrounds the polypeptide exit tunnel on the outside of the subunit. The polypeptide is Large ribosomal subunit protein uL24 (Agathobacter rectalis (strain ATCC 33656 / DSM 3377 / JCM 17463 / KCTC 5835 / VPI 0990) (Eubacterium rectale)).